Reading from the N-terminus, the 208-residue chain is Large ribosomal subunit protein uL3 (208 aa).

The segment at 116–148 (GFQGVIKRHGQSRGPMAHGSRYHRRPGSMGPVA) is disordered.

Belongs to the universal ribosomal protein uL3 family. Part of the 50S ribosomal subunit. Forms a cluster with proteins L14 and L19.

In terms of biological role, one of the primary rRNA binding proteins, it binds directly near the 3'-end of the 23S rRNA, where it nucleates assembly of the 50S subunit. The chain is Large ribosomal subunit protein uL3 from Streptococcus pyogenes serotype M12 (strain MGAS2096).